The primary structure comprises 479 residues: Ribosomal RNA small subunit methyltransferase F (479 aa).

Residues A125 to K131, E149, D176, and D194 contribute to the S-adenosyl-L-methionine site. Catalysis depends on C247, which acts as the Nucleophile.

This sequence belongs to the class I-like SAM-binding methyltransferase superfamily. RsmB/NOP family.

It is found in the cytoplasm. The enzyme catalyses cytidine(1407) in 16S rRNA + S-adenosyl-L-methionine = 5-methylcytidine(1407) in 16S rRNA + S-adenosyl-L-homocysteine + H(+). Its function is as follows. Specifically methylates the cytosine at position 1407 (m5C1407) of 16S rRNA. The chain is Ribosomal RNA small subunit methyltransferase F from Salmonella paratyphi C (strain RKS4594).